The sequence spans 452 residues: Cobyrinate a,c-diamide synthase (452 aa).

A GATase cobBQ-type domain is found at 246 to 439 (TLAYALDDAF…LHVHFYQDEQ (194 aa)). Cys-328 acts as the Nucleophile in catalysis.

This sequence belongs to the CobB/CbiA family. Mg(2+) is required as a cofactor.

It catalyses the reaction cob(II)yrinate + 2 L-glutamine + 2 ATP + 2 H2O = cob(II)yrinate a,c diamide + 2 L-glutamate + 2 ADP + 2 phosphate + 2 H(+). The protein operates within cofactor biosynthesis; adenosylcobalamin biosynthesis; cob(II)yrinate a,c-diamide from sirohydrochlorin (anaerobic route): step 10/10. In terms of biological role, catalyzes the ATP-dependent amidation of the two carboxylate groups at positions a and c of cobyrinate, using either L-glutamine or ammonia as the nitrogen source. The protein is Cobyrinate a,c-diamide synthase of Streptococcus sanguinis (strain SK36).